The sequence spans 620 residues: MEGSYLSAQENQPIPERLIPRSNSTSNLFALSSTFSKLNVRNDADYNYSNPNKKRHIYSGEIDCRSVTAARKFPVRSCSMTAAQQRKRTALFTVRERNSYHEGFNNDQDYVSQYQKPQYTFGVYKELTPYQLQRSKMKRSFQFPNGEIYKPKLDGKCTHSLKKPELNSRDSSLFKFSEKKGRNLSKDFVGPHNGTSVIHIPPNDTGYGVNSLELNTSVPSTIKSSVSSTSPISAVNTLTSLPESQTDDDDGYENKTVTISYCFENTVNEKHGSHIEKLDLSTKEKTKPTTNSGLFDRKKKTILGTEKYRCIKSQSKLKLGSVLKKLWRTSGNSNTKHGKKDTKRRRIPIDDMVTHSDGNSEAENDIELMDANLDGIEFDDDETLMDTDSIFDDLLSKENDKYDLRRRQLEIRQKLHETSHNDDGKVSFRDTEKHNVNEGLIDKTIIEEFSKLGEYIIDTRNQPPPRSSKRPSLDDNESARYFYNISTDLRQSLSGPISLPMHVGNDMVNRLRNDWEYIRFEDRRNSLPDSSFDKVETPPKPIKKDVRFAKEVCLASTWSSNAYERANPEFIMNRHRLLWMMKVHPSMNSAMNEIKLELNSYKKNEMVVHENSKCFTHYLI.

The span at Met1–Gln12 shows a compositional bias: polar residues. The interval Met1 to Pro20 is disordered. A phosphoserine mark is found at Ser472 and Ser526.

It to yeast YER158C.

Functionally, acts in conjunction with the alpha-factor receptor to promote morphogenesis and adaptation. This is Protein AFR1 (AFR1) from Saccharomyces cerevisiae (strain ATCC 204508 / S288c) (Baker's yeast).